Consider the following 1416-residue polypeptide: 1-phosphatidylinositol 4,5-bisphosphate phosphodiesterase eta-2 (1416 aa).

Positions 1 to 155 (MSGPWPSPDS…WVTGLRYLMA (155 aa)) are necessary for plasma membrane localization. One can recognise a PH domain in the interval 47–155 (GAMQEGMQMV…WVTGLRYLMA (109 aa)). EF-hand domains lie at 169-204 (TRDQ…LNVN) and 205-241 (LPRQ…MSTR). Ca(2+) is bound by residues Asp-182, Asn-184, Asp-186, Ser-188, and Glu-193. The region spanning 326–471 (QDMTQPLSHY…LKGKILVKGK (146 aa)) is the PI-PLC X-box domain. Residue His-341 is part of the active site. Asn-342, Glu-371, and Asp-373 together coordinate Ca(2+). The active site involves His-385. Residue Glu-420 coordinates Ca(2+). Substrate is bound by residues Lys-469 and Lys-471. A phosphoserine mark is found at Ser-487 and Ser-491. The disordered stretch occupies residues 535–620 (DPNNFSVSTL…RGATRQKKTM (86 aa)). Residues 537-546 (NNFSVSTLSP) show a composition bias toward polar residues. Positions 581–592 (SRRKKKGSKLKK) are enriched in basic residues. Residues Ser-595 and Ser-605 each carry the phosphoserine modification. One can recognise a PI-PLC Y-box domain in the interval 626–740 (LSDLVKYTKS…GYVLKPGCMC (115 aa)). Residues Ser-653 and Arg-680 each coordinate substrate. The C2 domain occupies 740–869 (CQGVFNPNSE…PGYRHVYLEG (130 aa)). The Ca(2+) site is built by Ile-784, Asp-786, Asp-810, Asp-839, His-840, and Asp-841. Disordered regions lie at residues 905–1109 (GSLD…GGWR), 1121–1222 (YSDA…LQPR), and 1315–1405 (ITSP…GPAS). Pro residues predominate over residues 1011 to 1021 (APGPGPPPPAA). Over residues 1073–1083 (GSQTDGRSQPR) the composition is skewed to polar residues. Low complexity predominate over residues 1143–1166 (VSSSSSMSSSDTVIDLSLPSLGLG). The segment covering 1199–1208 (KSKSNPNLRA) has biased composition (polar residues). The span at 1324–1333 (AGEGVAGGPG) shows a compositional bias: gly residues.

It depends on Ca(2+) as a cofactor. In terms of tissue distribution, expressed in retina and kidney.

It localises to the cytoplasm. The protein resides in the cell membrane. It carries out the reaction a 1,2-diacyl-sn-glycero-3-phospho-(1D-myo-inositol-4,5-bisphosphate) + H2O = 1D-myo-inositol 1,4,5-trisphosphate + a 1,2-diacyl-sn-glycerol + H(+). Activity is stimulated by GNB1:GNG2. Functionally, the production of the second messenger molecules diacylglycerol (DAG) and inositol 1,4,5-trisphosphate (IP3) is mediated by activated phosphatidylinositol-specific phospholipase C enzymes. This phospholipase activity is very sensitive to calcium. May be important for formation and maintenance of the neuronal network in the postnatal brain. The chain is 1-phosphatidylinositol 4,5-bisphosphate phosphodiesterase eta-2 from Homo sapiens (Human).